Here is a 429-residue protein sequence, read N- to C-terminus: Glutamyl-tRNA reductase (429 aa).

Residues 50-53 (TCNR), serine 108, 113-115 (EPQ), and glutamine 119 contribute to the substrate site. The active-site Nucleophile is cysteine 51. 188–193 (GAGEMI) is a binding site for NADP(+).

It belongs to the glutamyl-tRNA reductase family. In terms of assembly, homodimer.

The enzyme catalyses (S)-4-amino-5-oxopentanoate + tRNA(Glu) + NADP(+) = L-glutamyl-tRNA(Glu) + NADPH + H(+). It functions in the pathway porphyrin-containing compound metabolism; protoporphyrin-IX biosynthesis; 5-aminolevulinate from L-glutamyl-tRNA(Glu): step 1/2. In terms of biological role, catalyzes the NADPH-dependent reduction of glutamyl-tRNA(Glu) to glutamate 1-semialdehyde (GSA). The protein is Glutamyl-tRNA reductase of Polaromonas naphthalenivorans (strain CJ2).